The chain runs to 283 residues: Formamidopyrimidine-DNA glycosylase (283 aa).

Catalysis depends on proline 2, which acts as the Schiff-base intermediate with DNA. Glutamate 3 acts as the Proton donor in catalysis. Lysine 60 acts as the Proton donor; for beta-elimination activity in catalysis. DNA-binding residues include histidine 100, arginine 119, and arginine 164. An FPG-type zinc finger spans residues 249–283; that stretch reads WVYGRENKPCRKCGVKILKAKVAGRGTHWCPNCQK. Arginine 273 (proton donor; for delta-elimination activity) is an active-site residue.

Belongs to the FPG family. In terms of assembly, monomer. The cofactor is Zn(2+).

The enzyme catalyses Hydrolysis of DNA containing ring-opened 7-methylguanine residues, releasing 2,6-diamino-4-hydroxy-5-(N-methyl)formamidopyrimidine.. The catalysed reaction is 2'-deoxyribonucleotide-(2'-deoxyribose 5'-phosphate)-2'-deoxyribonucleotide-DNA = a 3'-end 2'-deoxyribonucleotide-(2,3-dehydro-2,3-deoxyribose 5'-phosphate)-DNA + a 5'-end 5'-phospho-2'-deoxyribonucleoside-DNA + H(+). Its function is as follows. Involved in base excision repair of DNA damaged by oxidation or by mutagenic agents. Acts as a DNA glycosylase that recognizes and removes damaged bases. Has a preference for oxidized purines, such as 7,8-dihydro-8-oxoguanine (8-oxoG). Has AP (apurinic/apyrimidinic) lyase activity and introduces nicks in the DNA strand. Cleaves the DNA backbone by beta-delta elimination to generate a single-strand break at the site of the removed base with both 3'- and 5'-phosphates. This is Formamidopyrimidine-DNA glycosylase from Prochlorococcus marinus (strain SARG / CCMP1375 / SS120).